We begin with the raw amino-acid sequence, 236 residues long: 2,3,4,5-tetrahydropyridine-2,6-dicarboxylate N-acetyltransferase (236 aa).

The protein belongs to the transferase hexapeptide repeat family. DapH subfamily.

It catalyses the reaction (S)-2,3,4,5-tetrahydrodipicolinate + acetyl-CoA + H2O = L-2-acetamido-6-oxoheptanedioate + CoA. It participates in amino-acid biosynthesis; L-lysine biosynthesis via DAP pathway; LL-2,6-diaminopimelate from (S)-tetrahydrodipicolinate (acetylase route): step 1/3. In terms of biological role, catalyzes the transfer of an acetyl group from acetyl-CoA to tetrahydrodipicolinate. This Clostridium botulinum (strain 657 / Type Ba4) protein is 2,3,4,5-tetrahydropyridine-2,6-dicarboxylate N-acetyltransferase.